A 188-amino-acid chain; its full sequence is ATP synthase subunit b (188 aa).

Residues Val-19 to Phe-39 traverse the membrane as a helical segment.

It belongs to the ATPase B chain family. F-type ATPases have 2 components, F(1) - the catalytic core - and F(0) - the membrane proton channel. F(1) has five subunits: alpha(3), beta(3), gamma(1), delta(1), epsilon(1). F(0) has three main subunits: a(1), b(2) and c(10-14). The alpha and beta chains form an alternating ring which encloses part of the gamma chain. F(1) is attached to F(0) by a central stalk formed by the gamma and epsilon chains, while a peripheral stalk is formed by the delta and b chains.

The protein resides in the cell membrane. In terms of biological role, f(1)F(0) ATP synthase produces ATP from ADP in the presence of a proton or sodium gradient. F-type ATPases consist of two structural domains, F(1) containing the extramembraneous catalytic core and F(0) containing the membrane proton channel, linked together by a central stalk and a peripheral stalk. During catalysis, ATP synthesis in the catalytic domain of F(1) is coupled via a rotary mechanism of the central stalk subunits to proton translocation. Its function is as follows. Component of the F(0) channel, it forms part of the peripheral stalk, linking F(1) to F(0). This is ATP synthase subunit b from Mesomycoplasma hyopneumoniae (strain 7448) (Mycoplasma hyopneumoniae).